The sequence spans 209 residues: Orotate phosphoribosyltransferase (209 aa).

5-phospho-alpha-D-ribose 1-diphosphate is bound by residues arginine 96, lysine 100, histidine 102, and 122–130; that span reads EDLISTGGS. An orotate-binding site is contributed by serine 126.

This sequence belongs to the purine/pyrimidine phosphoribosyltransferase family. PyrE subfamily. Homodimer. The cofactor is Mg(2+).

It catalyses the reaction orotidine 5'-phosphate + diphosphate = orotate + 5-phospho-alpha-D-ribose 1-diphosphate. It functions in the pathway pyrimidine metabolism; UMP biosynthesis via de novo pathway; UMP from orotate: step 1/2. In terms of biological role, catalyzes the transfer of a ribosyl phosphate group from 5-phosphoribose 1-diphosphate to orotate, leading to the formation of orotidine monophosphate (OMP). The chain is Orotate phosphoribosyltransferase from Streptococcus pyogenes serotype M3 (strain ATCC BAA-595 / MGAS315).